Here is a 596-residue protein sequence, read N- to C-terminus: Elongation factor 4 (596 aa).

The region spanning 2-183 (KNIRNFSIIA…AIVDRIPAPV (182 aa)) is the tr-type G domain. Residues 14 to 19 (DHGKST) and 130 to 133 (NKID) each bind GTP.

Belongs to the TRAFAC class translation factor GTPase superfamily. Classic translation factor GTPase family. LepA subfamily.

The protein resides in the cell inner membrane. It carries out the reaction GTP + H2O = GDP + phosphate + H(+). In terms of biological role, required for accurate and efficient protein synthesis under certain stress conditions. May act as a fidelity factor of the translation reaction, by catalyzing a one-codon backward translocation of tRNAs on improperly translocated ribosomes. Back-translocation proceeds from a post-translocation (POST) complex to a pre-translocation (PRE) complex, thus giving elongation factor G a second chance to translocate the tRNAs correctly. Binds to ribosomes in a GTP-dependent manner. This chain is Elongation factor 4, found in Sulfurimonas denitrificans (strain ATCC 33889 / DSM 1251) (Thiomicrospira denitrificans (strain ATCC 33889 / DSM 1251)).